Consider the following 52-residue polypeptide: Defensin-like protein 2B (52 aa).

4 disulfide bridges follow: C4–C52, C16–C37, C22–C46, and C26–C48.

Forms oligomers in its native state.

Its function is as follows. Possesses antifungal activity sensitive to inorganic cations. The protein is Defensin-like protein 2B of Sinapis alba (White mustard).